A 359-amino-acid chain; its full sequence is Protein RecA (359 aa).

Position 73-80 (73-80) interacts with ATP; the sequence is GPESSGKT.

The protein belongs to the RecA family.

The protein resides in the cytoplasm. Its function is as follows. Can catalyze the hydrolysis of ATP in the presence of single-stranded DNA, the ATP-dependent uptake of single-stranded DNA by duplex DNA, and the ATP-dependent hybridization of homologous single-stranded DNAs. It interacts with LexA causing its activation and leading to its autocatalytic cleavage. The polypeptide is Protein RecA (Desulfovibrio desulfuricans (strain ATCC 27774 / DSM 6949 / MB)).